Consider the following 199-residue polypeptide: MDADSSSRSPRDTRRRSRQREKMPYFADEVRERDRVRNLPKLKTTQKRTPTPPRERRSRHERPRSRSRTHSPEQSRCQRRLSRSYVRHRSGSRQKTYSSSCSRRRRSRSRSRSRGRSRTPRIITVPVPVPAAEYSYAYGWPPPRPHFNPMYGALPFGMQPRPLNPYFGAYARPPPFRYRAGPFRPHPRYSYRNDRQAPN.

Disordered regions lie at residues 1 to 121 (MDAD…RTPR) and 178 to 199 (YRAGPFRPHPRYSYRNDRQAPN). A compositionally biased stretch (basic and acidic residues) spans 20–37 (REKMPYFADEVRERDRVR). Composition is skewed to basic residues over residues 56–69 (RRSRHERPRSRSRT), 77–92 (CQRRLSRSYVRHRSGS), and 102–119 (SRRRRSRSRSRSRGRSRT).

It is found in the nucleus speckle. In terms of biological role, member of the regulatory pathway controlling female somatic sexual differentiation, regulated by Sxl. Activates dsx female-specific splicing by promoting the formation of a splicing enhancer complex which consists of tra, tra2 and sr proteins. This chain is Female-specific protein transformer (tra), found in Drosophila virilis (Fruit fly).